Reading from the N-terminus, the 300-residue chain is Beta-lactamase (300 aa).

The signal sequence occupies residues 1–29 (MTMFKTTFRQTATIAVSLISLLVSPMLWA). Residue Ser75 is the Acyl-ester intermediate of the active site. Residue 239–241 (KTG) coordinates substrate.

The protein belongs to the class-A beta-lactamase family. Monomer.

The enzyme catalyses a beta-lactam + H2O = a substituted beta-amino acid. Hydrolyzes broad-spectrum beta-lactam antibiotics. Active against cephalosporins such as cefuroxime and cefotaxime. The polypeptide is Beta-lactamase (blaB) (Proteus vulgaris).